The following is a 109-amino-acid chain: Staphostatin B (109 aa).

Residues Ile-97–Arg-101 are binds to staphopain B.

Belongs to the protease inhibitor I57 (SspC) family. In terms of assembly, forms a stable non-covalent complex with prematurely activated/folded SspB.

The protein localises to the cytoplasm. Specifically inhibits the cysteine protease staphopain B (SspB) by blocking the active site of the enzyme. Probably required to protect cytoplasmic proteins from being degraded by prematurely activated/folded prostaphopain B. Also involved in growth capacity, viability and bacterial morphology. This Staphylococcus aureus (strain MRSA252) protein is Staphostatin B (sspC).